The chain runs to 879 residues: Metabotropic glutamate receptor 3 (879 aa).

The N-terminal stretch at 1–22 is a signal peptide; it reads MKMLTRLQVLMLALFSKGFLVS. At 23-576 the chain is on the extracellular side; the sequence is LGDHNFMRRE…EDYIRWEDAW (554 aa). Cys-57 and Cys-99 are joined by a disulfide. L-glutamate contacts are provided by residues Ser-151 and 172–174; that span reads AST. Asn-209 carries N-linked (GlcNAc...) asparagine glycosylation. Tyr-222 serves as a coordination point for L-glutamate. 7 cysteine pairs are disulfide-bonded: Cys-240–Cys-527, Cys-361–Cys-373, Cys-412–Cys-419, Cys-509–Cys-528, Cys-513–Cys-531, Cys-534–Cys-546, and Cys-549–Cys-562. An N-linked (GlcNAc...) asparagine glycan is attached at Asn-292. Asp-301 serves as a coordination point for L-glutamate. Residue Lys-389 participates in L-glutamate binding. 2 N-linked (GlcNAc...) asparagine glycosylation sites follow: Asn-414 and Asn-439. The chain crosses the membrane as a helical span at residues 577 to 599; the sequence is AIGPVTIACLGFMCTCIVITVFI. The Cytoplasmic segment spans residues 600–613; sequence KHNNTPLVKASGRE. The chain crosses the membrane as a helical span at residues 614–634; that stretch reads LCYILLFGVSLSYCMTFFFIA. Topologically, residues 635 to 645 are extracellular; it reads KPSPVICALRR. The helical transmembrane segment at 646–664 threads the bilayer; that stretch reads LGLGTSFAICYSALLTKTN. Residues 665–688 lie on the Cytoplasmic side of the membrane; it reads CIARIFDGVKNGAQRPKFISPSSQ. A helical transmembrane segment spans residues 689–709; it reads VFICLGLILVQIVMVSVWLIL. At 710 to 734 the chain is on the extracellular side; it reads ETPGTRRYTLPEKRETVILKCNVKD. A helical membrane pass occupies residues 735–756; the sequence is SSMLISLTYDVVLVILCTVYAF. Topologically, residues 757–769 are cytoplasmic; that stretch reads KTRKCPENFNEAK. Residues 770 to 792 form a helical membrane-spanning segment; that stretch reads FIGFTMYTTCIIWLAFLPIFYVT. At 793-802 the chain is on the extracellular side; the sequence is SSDYRVQTTT. Residues 803–828 traverse the membrane as a helical segment; it reads MCISVSLSGFVVLGCLFAPKVHIVLF. Residues 829–879 are Cytoplasmic-facing; that stretch reads QPQKNVVTHRLHLNRFSVSGTATTYSQSSASTYVPTVCNGREVLDSTTSSL.

It belongs to the G-protein coupled receptor 3 family. In terms of assembly, interacts with TAMALIN.

Its subcellular location is the cell membrane. In terms of biological role, G-protein coupled receptor for glutamate. Ligand binding causes a conformation change that triggers signaling via guanine nucleotide-binding proteins (G proteins) and modulates the activity of down-stream effectors. Signaling inhibits adenylate cyclase activity. The chain is Metabotropic glutamate receptor 3 (Grm3) from Mus musculus (Mouse).